Reading from the N-terminus, the 134-residue chain is Photosystem II assembly factor lipoprotein Psb27 (134 aa).

Residues 1 to 21 form the signal peptide; it reads MKRFWAMVCALFLSVSLLLTS. Cys22 is lipidated: N-palmitoyl cysteine. Residue Cys22 is the site of S-diacylglycerol cysteine attachment.

The protein belongs to the Psb27 family. Part of a photosystem II (PSII) assembly intermediate complex PSII-I; crystallized from a strain deleted of psbJ, it forms monomeric PSII before addition of the oxygen evolving complex. PSII-I includes 3 assembly factors not found in mature PSII (Psb27, Psb28 and Psb34). Binds to the lumenal side of PSII, adjacent to the CP43 (psbC) subunit.

Its subcellular location is the cellular thylakoid membrane. In terms of biological role, plays a role in the repair and/or biogenesis of the calcium-manganese-oxide cluster on the lumenal face of the thylakoid membrane. Its presence in a photosystem II (PSII) preparation prevents binding of other extrinsic subunits PsbO, PsbU and PsbV, and thus assembly of calcium-manganese-oxide cluster. Psb27-containing complexes lack oxygen evolving activity and an oxidizable calcium-manganese-oxide cluster, but have a normal reaction center. This chain is Photosystem II assembly factor lipoprotein Psb27, found in Thermosynechococcus vestitus (strain NIES-2133 / IAM M-273 / BP-1).